The chain runs to 454 residues: Probable tRNA methyltransferase 9B (454 aa).

A Phosphoserine modification is found at Ser-214.

Belongs to the methyltransferase superfamily. Down-regulated in breast, bladder, colorectal, cervix and testicular carcinomas.

In terms of biological role, may modify wobble uridines in specific arginine and glutamic acid tRNAs. Acts as a tumor suppressor by promoting the expression of LIN9. This is Probable tRNA methyltransferase 9B from Homo sapiens (Human).